The following is a 647-amino-acid chain: NADP-dependent malic enzyme, chloroplastic (647 aa).

The N-terminal 61 residues, 1–61 (MMSLNSSSVV…VDGAVKDVNA (61 aa)), are a transit peptide targeting the chloroplast. The active-site Proton donor is Tyr-195. Residue Arg-248 participates in NAD(+) binding. Catalysis depends on Lys-266, which acts as the Proton acceptor. A divalent metal cation contacts are provided by Glu-338, Asp-339, and Asp-362. Asp-362 serves as a coordination point for NAD(+). 391 to 407 (LFLGAGEAGTGIAELIA) is an NADP(+) binding site. Asn-503 provides a ligand contact to NAD(+).

It belongs to the malic enzymes family. Homotetramer. The cofactor is Mg(2+). It depends on Mn(2+) as a cofactor.

Its subcellular location is the plastid. The protein localises to the chloroplast. It carries out the reaction (S)-malate + NADP(+) = pyruvate + CO2 + NADPH. The enzyme catalyses oxaloacetate + H(+) = pyruvate + CO2. The protein operates within photosynthesis; C3 acid pathway. The chloroplastic ME isoform decarboxylates malate shuttled from neighboring mesophyll cells. The CO(2) released is then refixed by ribulose-bisphosphate carboxylase. This pathway eliminates the photorespiratory loss of CO(2) that occurs in most plants. This Flaveria pringlei protein is NADP-dependent malic enzyme, chloroplastic (MODA).